The following is a 756-amino-acid chain: LIM domain and actin-binding protein 1 (756 aa).

Methionine 1 carries the N-acetylmethionine modification. Phosphoserine occurs at positions 15 and 55. Positions 44–56 (AAEEANMEKRRSN) are enriched in basic and acidic residues. 2 disordered regions span residues 44–183 (AAEE…SNKI) and 204–377 (QTKI…AVKK). A compositionally biased stretch (low complexity) spans 107–118 (EVASSSASGVEA). At serine 130 the chain carries Phosphoserine. Residues 140 to 173 (RIKDTEHLKDHSAESKKMENCLAESRHEVGKPET) show a composition bias toward basic and acidic residues. A Required for interaction with NPC1L1 motif is present at residues 164–166 (SRH). Serine 221 carries the post-translational modification Phosphoserine. Tyrosine 225 is subject to Phosphotyrosine. Residues serine 226 and serine 238 each carry the phosphoserine modification. The span at 245-254 (EKSESRRNLE) shows a compositional bias: basic and acidic residues. A Phosphoserine modification is found at serine 259. Residues 274 to 287 (VSKQSSSTNYTNEL) show a composition bias toward polar residues. The segment covering 294–303 (IKTHKLEQKE) has biased composition (basic and acidic residues). 5 positions are modified to phosphoserine: serine 339, serine 346, serine 358, serine 365, and serine 370. Positions 384 to 444 (ETCVECQKTV…KPHFNQLFKS (61 aa)) constitute an LIM zinc-binding domain. Lysine 435 is modified (N6-succinyllysine). Serine 486 is subject to Phosphoserine. The interval 489–509 (VEDAPIAKVGVLTASMEAKAS) is required for interaction with MYO5B. Residues 508–726 (ASSQLEKEDK…TTQKQKSQDV (219 aa)) form a disordered region. A compositionally biased stretch (basic and acidic residues) spans 512–523 (LEKEDKPAETKK). The span at 533–542 (ELSSSGSALE) shows a compositional bias: low complexity. Positions 552 to 563 (WPPEDEVSKPEA) are enriched in basic and acidic residues. A phosphoserine mark is found at serine 597, serine 600, serine 605, and serine 613. The span at 627–637 (AERKQMEKASA) shows a compositional bias: basic and acidic residues. The segment covering 638 to 651 (SEKNGSVGKTTWPS) has biased composition (polar residues). Over residues 652–667 (KESRGGEAAGRSKEVQ) the composition is skewed to basic and acidic residues. Polar residues predominate over residues 691–721 (LQQQSPLEPKSKNWSSFADNTSAKEFTTQKQ). Phosphoserine occurs at positions 695, 723, and 738.

Interacts with NPC1L1; bridges NPC1L1 with MYO5B. Interacts with MYO5B; bridges MYO5B with NPC1L1. Interacts with PXN; this complex stabilizes actin dynamics. Interacts with F-actin and G-actin. Interacts with LUZP1 (via C-terminus); both proteins restrict ciliation and may work together to regulate this process. Binds RAB40B (GTP-bound); interaction influences LIMA1 subcellular localization in lamellipodia during cell migration. Post-translationally, phosphorylation of the C-terminal region by MAPK1/MAPK3 reduces its association with F-actin and contributes to actin filament reorganization and enhances cell motility. In terms of processing, ubiquitinated by the ECS(RAB40B) complex leading to its degradation. In terms of tissue distribution, widely expressed. Highest levels of isoform 2 are expressed in lung, spleen and small intestine. Isoform 2 is expressed at higher levels than isoform 1 in most tissues except liver, fat and kidney. Isoform 1 and isoform 2 are expressed at low levels in skeletal muscle, heart, stomach and lymph.

It localises to the cytoplasm. Its subcellular location is the cell junction. The protein resides in the focal adhesion. It is found in the cytoskeleton. The protein localises to the stress fiber. It localises to the cell membrane. Its subcellular location is the cell projection. The protein resides in the ruffle. It is found in the lamellipodium. Actin-binding protein involved in actin cytoskeleton regulation and dynamics. Increases the number and size of actin stress fibers and inhibits membrane ruffling. Inhibits actin filament depolymerization. Bundles actin filaments, delays filament nucleation and reduces formation of branched filaments. Acts as a negative regulator of primary cilium formation. Plays a role in cholesterol homeostasis. Influences plasma cholesterol levels through regulation of intestinal cholesterol absorption. May act as a scaffold protein by regulating NPC1L1 transportation, an essential protein for cholesterol absorption, to the plasma membrane by recruiting MYO5B to NPC1L1, and thus facilitates cholesterol uptake. The chain is LIM domain and actin-binding protein 1 from Sus scrofa (Pig).